The primary structure comprises 722 residues: Glycine--tRNA ligase beta subunit (722 aa).

It belongs to the class-II aminoacyl-tRNA synthetase family. In terms of assembly, tetramer of two alpha and two beta subunits.

It is found in the cytoplasm. It catalyses the reaction tRNA(Gly) + glycine + ATP = glycyl-tRNA(Gly) + AMP + diphosphate. The chain is Glycine--tRNA ligase beta subunit (glyS) from Xylella fastidiosa (strain 9a5c).